The primary structure comprises 364 residues: NAC transcription factor 56 (364 aa).

Positions 1–23 (MESTDSSGGPPPPQPNLPPGFRF) are disordered. Pro residues predominate over residues 9-18 (GPPPPQPNLP). In terms of domain architecture, NAC spans 17–178 (LPPGFRFHPT…DWVLCRIYKK (162 aa)). Residues 116–184 (VGVKKALVFY…IYKKNNASRH (69 aa)) mediate DNA binding.

Stamen specific, in anthers from stage 8. Expressed in the outer integument, but seems not expressed in the embryo at the torpedo stage.

Its subcellular location is the nucleus. In terms of biological role, transcription factor of the NAC family. Together with NAC018/NARS2, regulates embryogenesis by regulating the development and degeneration of ovule integuments, a process required for intertissue communication between the embryo and the maternal integument. This chain is NAC transcription factor 56, found in Arabidopsis thaliana (Mouse-ear cress).